The sequence spans 213 residues: Translation initiation factor IF-3 (213 aa).

A disordered region spans residues 193–213; the sequence is EKIASLPPLPPDNSGEPEDDE.

The protein belongs to the IF-3 family. As to quaternary structure, monomer.

The protein localises to the cytoplasm. In terms of biological role, IF-3 binds to the 30S ribosomal subunit and shifts the equilibrium between 70S ribosomes and their 50S and 30S subunits in favor of the free subunits, thus enhancing the availability of 30S subunits on which protein synthesis initiation begins. This Chlorobaculum tepidum (strain ATCC 49652 / DSM 12025 / NBRC 103806 / TLS) (Chlorobium tepidum) protein is Translation initiation factor IF-3.